A 291-amino-acid polypeptide reads, in one-letter code: N-acetylmannosamine kinase (291 aa).

ATP is bound by residues 5–12 (AIDIGGTK) and 132–139 (GVGGGVVS). Zn(2+)-binding residues include histidine 156, cysteine 166, cysteine 168, and cysteine 173.

It belongs to the ROK (NagC/XylR) family. NanK subfamily. In terms of assembly, homodimer.

The enzyme catalyses an N-acyl-D-mannosamine + ATP = an N-acyl-D-mannosamine 6-phosphate + ADP + H(+). It functions in the pathway amino-sugar metabolism; N-acetylneuraminate degradation; D-fructose 6-phosphate from N-acetylneuraminate: step 2/5. Catalyzes the phosphorylation of N-acetylmannosamine (ManNAc) to ManNAc-6-P. This Shigella boydii serotype 18 (strain CDC 3083-94 / BS512) protein is N-acetylmannosamine kinase.